A 414-amino-acid chain; its full sequence is Myb1 protein (414 aa).

Myb-like domains lie at 242 to 266 (WNEV…LYYG), 268 to 320 (FEDD…IKIN), and 328 to 381 (KVKL…TNLN).

Its subcellular location is the nucleus. In terms of biological role, transcriptional activator. Has a role in the parasite erythrocytic cycle where it directly regulates key genes involved in cell cycle regulation and progression. Binds directly to Myb regulatory elements. In Plasmodium falciparum (isolate 3D7), this protein is Myb1 protein.